The sequence spans 384 residues: Transcriptional regulator of the unfolded protein response hacA (384 aa).

Polar residues predominate over residues 1–18 (MTESTFAVETFSMDSMSP). Disordered regions lie at residues 1-27 (MTES…IPRL) and 41-94 (LVPE…QRRI). The segment covering 84-94 (KTEDEKEQRRI) has biased composition (basic and acidic residues). Residues 90-153 (EQRRIERVLR…NRLSQQVAKL (64 aa)) form the bZIP domain. Positions 92–101 (RRIERVLRNR) are basic motif. Residues 106-113 (ISRERKRL) form a leucine-zipper region. Disordered stretches follow at residues 208-256 (SIPF…PSDL) and 331-384 (PDED…AGAQ). Low complexity predominate over residues 218–240 (STTTTTTTTTTTSNNISSTSSTT).

This sequence belongs to the bZIP family.

It is found in the nucleus. In terms of biological role, master transcriptional regulator of the unfolded protein response (UPR) that recognizes and binds to the UPR element (UPRE) in the promoter of UPR-regulated genes. Exposure to antifungals and ER-stressing agents initiates the activation of hacA which occurs when a 20 nucleotide fragment is removed from part of the exon-2 and part of intron-2, which in turn promotes the arisen of the DNA binding site motif and a dimer interface domain. Modulates the expression of genes related to cell wall synthesis, ergosterol biosynthesis, pigmentation, heat shock proteins, and the genes coding for mannosyltransferase enzymes. Plays a key role in both response to stress and host-pathogen interaction. The protein is Transcriptional regulator of the unfolded protein response hacA of Trichophyton rubrum (strain ATCC MYA-4607 / CBS 118892) (Athlete's foot fungus).